A 543-amino-acid polypeptide reads, in one-letter code: Tetrahydroberberine oxidase (543 aa).

The N-terminal stretch at 1-26 (MIPNSSSSSILSLLVLLLFSTSSSWA) is a signal peptide. A disulfide bond links Cys-37 and Cys-97. 9 N-linked (GlcNAc...) asparagine glycosylation sites follow: Asn-54, Asn-74, Asn-135, Asn-142, Asn-162, Asn-295, Asn-335, Asn-440, and Asn-482. Residues 75–250 (STQKPEFIIT…LSWKVKLVPV (176 aa)) form the FAD-binding PCMH-type domain. Residues 112 to 175 (HDVEGLSYVS…NTLGFPAGFC (64 aa)) constitute a cross-link (6-(S-cysteinyl)-8alpha-(pros-histidyl)-FAD (His-Cys)).

Belongs to the oxygen-dependent FAD-linked oxidoreductase family. The cofactor is FAD. The FAD cofactor is bound via a bicovalent 6-S-cysteinyl, 8alpha-N1-histidyl FAD linkage.

It catalyses the reaction (S)-canadine + 2 O2 + H(+) = berberine + 2 H2O2. Catalyzes the oxidation of different tetrahydroprotoberberines, such as (S)-canadine, (S)-scoulerine and (S)-tetrahydropalmatine. The chain is Tetrahydroberberine oxidase from Argemone mexicana (Mexican prickly poppy).